The primary structure comprises 97 residues: Thiosulfate sulfurtransferase/rhodanese-like domain-containing protein 3 (97 aa).

Residues 32-84 enclose the Rhodanese domain; that stretch reads YKELKNLLNSKNIMLIDVREIWEILEYQKIPESINVPLDEVGEALQMNPRDFK. Lys-84 is modified (N6-succinyllysine).

This chain is Thiosulfate sulfurtransferase/rhodanese-like domain-containing protein 3 (TSTD3), found in Homo sapiens (Human).